Consider the following 306-residue polypeptide: Oxygen-dependent coproporphyrinogen-III oxidase (306 aa).

Residue Ser93 coordinates substrate. Residues His97 and His107 each coordinate a divalent metal cation. The Proton donor role is filled by His107. 109 to 111 contributes to the substrate binding site; that stretch reads NVR. His146 and His176 together coordinate a divalent metal cation. The interval 241–276 is important for dimerization; the sequence is YVEYNLVYDRGTLFGLQSGGRTESILMSLPPQVAWG. A substrate-binding site is contributed by 259–261; sequence GGR.

The protein belongs to the aerobic coproporphyrinogen-III oxidase family. Homodimer. Requires a divalent metal cation as cofactor.

The protein resides in the cytoplasm. The catalysed reaction is coproporphyrinogen III + O2 + 2 H(+) = protoporphyrinogen IX + 2 CO2 + 2 H2O. It participates in porphyrin-containing compound metabolism; protoporphyrin-IX biosynthesis; protoporphyrinogen-IX from coproporphyrinogen-III (O2 route): step 1/1. In terms of biological role, involved in the heme biosynthesis. Catalyzes the aerobic oxidative decarboxylation of propionate groups of rings A and B of coproporphyrinogen-III to yield the vinyl groups in protoporphyrinogen-IX. The sequence is that of Oxygen-dependent coproporphyrinogen-III oxidase from Stutzerimonas stutzeri (strain A1501) (Pseudomonas stutzeri).